A 145-amino-acid polypeptide reads, in one-letter code: Internal scaffolding protein VP3 (145 aa).

Belongs to the microviridae B protein family.

It localises to the host cytoplasm. Participates in the assembly of the viral procapsid in the cytoplasm. Released from the procapsid upon genome packaging, possibly through affinity displacement by the protein ORF8, or by proteolysis. This Chlamydia phage 1 (Bacteriophage Chp1) protein is Internal scaffolding protein VP3.